The following is a 650-amino-acid chain: Acetyl-coenzyme A synthetase (650 aa).

CoA-binding positions include 191–194 (RGGR), T311, and N335. Residues 387–389 (GEP), 411–416 (DTWWQT), D500, and R515 contribute to the ATP site. S523 contacts CoA. Residue R526 participates in ATP binding. V537, H539, and V542 together coordinate Mg(2+). R584 is a CoA binding site. The residue at position 609 (K609) is an N6-acetyllysine.

The protein belongs to the ATP-dependent AMP-binding enzyme family. Mg(2+) is required as a cofactor. Acetylated. Deacetylation by the SIR2-homolog deacetylase activates the enzyme.

It catalyses the reaction acetate + ATP + CoA = acetyl-CoA + AMP + diphosphate. Catalyzes the conversion of acetate into acetyl-CoA (AcCoA), an essential intermediate at the junction of anabolic and catabolic pathways. AcsA undergoes a two-step reaction. In the first half reaction, AcsA combines acetate with ATP to form acetyl-adenylate (AcAMP) intermediate. In the second half reaction, it can then transfer the acetyl group from AcAMP to the sulfhydryl group of CoA, forming the product AcCoA. The protein is Acetyl-coenzyme A synthetase of Shewanella sediminis (strain HAW-EB3).